A 481-amino-acid polypeptide reads, in one-letter code: uncharacterized protein (481 aa).

The disordered stretch occupies residues 1–28 (MPQSNHYSHQSRSHNDRRRQQPDEKVQA). The TRAM domain maps to 29–87 (TVNIGQRFPLTIRRLGINGEGIGYYKHVITFVKGALPEEVVVAEVTAVHPRYLEAKIRS). Gln-313, Tyr-342, Asp-363, and Asp-411 together coordinate S-adenosyl-L-methionine. Cys-438 acts as the Nucleophile in catalysis.

This sequence belongs to the class I-like SAM-binding methyltransferase superfamily. RNA M5U methyltransferase family.

This is an uncharacterized protein from Lactiplantibacillus plantarum (strain ATCC BAA-793 / NCIMB 8826 / WCFS1) (Lactobacillus plantarum).